The sequence spans 211 residues: Redox-sensing transcriptional repressor Rex (211 aa).

Positions 17–56 (LYYRFVSSLKSKGIDRVNSKAISDALQIDSATIRRDFSYF) form a DNA-binding region, H-T-H motif. NAD(+) is bound at residue 91–96 (GVGNLG).

Belongs to the transcriptional regulatory Rex family. As to quaternary structure, homodimer.

The protein localises to the cytoplasm. Functionally, modulates transcription in response to changes in cellular NADH/NAD(+) redox state. The polypeptide is Redox-sensing transcriptional repressor Rex (Staphylococcus aureus (strain Mu3 / ATCC 700698)).